We begin with the raw amino-acid sequence, 432 residues long: Protein distal antenna-related (432 aa).

Residues 15 to 66 enclose the HTH psq-type domain; sequence TRGKRPLRNLTPNDKVRAIQRIHNGETKASVSRDLGVPESTLRGWCKNEQKL. The segment at residues 42–62 is a DNA-binding region (H-T-H motif); the sequence is KASVSRDLGVPESTLRGWCKN. Disordered stretches follow at residues 195–221 and 401–432; these read ESADTDIKSPQSTTDITDTAREENSTK and SCASVSSRNNSRSQTPDKSTATSIACLSDGEQ. Composition is skewed to polar residues over residues 202–211 and 401–425; these read KSPQSTTDIT and SCASVSSRNNSRSQTPDKSTATSIA.

Interacts with itself, dan, ey and dac to form a complex (or complexes) containing the RD factors.

It is found in the nucleus. In terms of biological role, probable transcription factor with a role in the retinal determination (RD) network. Regulates ato expression and is required for normal R8 induction and differentiation. Danr appears to repress Dan expression, but Dan is required for Danr expression anterior to the morphogenetic furrow (MF). Dan and Danr lie downstream of so and require dac function for highest levels of expression. Contributes to differentiation of antenna-specific characteristics; effector gene that acts downstream of homothorax (hth), Distal-less (Dll), cut (ct) and spineless (ss) genes to control differentiation of distal antennal structures. This is Protein distal antenna-related from Drosophila pseudoobscura pseudoobscura (Fruit fly).